Reading from the N-terminus, the 378-residue chain is Erythronate-4-phosphate dehydrogenase (378 aa).

Substrate contacts are provided by serine 45 and threonine 66. Positions 146 and 175 each coordinate NAD(+). Arginine 208 is a catalytic residue. An NAD(+)-binding site is contributed by aspartate 232. Residue glutamate 237 is part of the active site. The active-site Proton donor is the histidine 254. Glycine 257 contributes to the NAD(+) binding site. A substrate-binding site is contributed by tyrosine 258.

This sequence belongs to the D-isomer specific 2-hydroxyacid dehydrogenase family. PdxB subfamily. Homodimer.

It is found in the cytoplasm. It carries out the reaction 4-phospho-D-erythronate + NAD(+) = (R)-3-hydroxy-2-oxo-4-phosphooxybutanoate + NADH + H(+). It participates in cofactor biosynthesis; pyridoxine 5'-phosphate biosynthesis; pyridoxine 5'-phosphate from D-erythrose 4-phosphate: step 2/5. In terms of biological role, catalyzes the oxidation of erythronate-4-phosphate to 3-hydroxy-2-oxo-4-phosphonooxybutanoate. This Escherichia coli O139:H28 (strain E24377A / ETEC) protein is Erythronate-4-phosphate dehydrogenase.